The following is a 257-amino-acid chain: Phycoerythrobilin:ferredoxin oxidoreductase (257 aa).

The protein belongs to the HY2 family.

It carries out the reaction (3Z)-phycoerythrobilin + oxidized 2[4Fe-4S]-[ferredoxin] = 15,16-dihydrobiliverdin + reduced 2[4Fe-4S]-[ferredoxin] + 2 H(+). Functionally, catalyzes the two-electron reduction of the C2 and C3(1) diene system of 15,16-dihydrobiliverdin. The sequence is that of Phycoerythrobilin:ferredoxin oxidoreductase from Prochlorococcus marinus (strain MIT 9303).